A 218-amino-acid chain; its full sequence is Large ribosomal subunit protein bL25 (218 aa).

A disordered region spans residues 197 to 218 (PAEESGEKPVAHIEEKESTEKE). The segment covering 201–218 (SGEKPVAHIEEKESTEKE) has biased composition (basic and acidic residues).

This sequence belongs to the bacterial ribosomal protein bL25 family. CTC subfamily. As to quaternary structure, part of the 50S ribosomal subunit; part of the 5S rRNA/L5/L18/L25 subcomplex. Contacts the 5S rRNA. Binds to the 5S rRNA independently of L5 and L18.

This is one of the proteins that binds to the 5S RNA in the ribosome where it forms part of the central protuberance. This chain is Large ribosomal subunit protein bL25, found in Dehalococcoides mccartyi (strain ATCC BAA-2100 / JCM 16839 / KCTC 5957 / BAV1).